The primary structure comprises 782 residues: Probable cyclic di-GMP phosphodiesterase PdeI (782 aa).

2 consecutive transmembrane segments (helical) span residues 12–32 (LIIL…IINY) and 286–306 (LFYL…LMTT). Residues 527 to 781 (NIWIARNIRH…AWDKSGKLVK (255 aa)) form the EAL domain.

Its subcellular location is the cell membrane. The enzyme catalyses 3',3'-c-di-GMP + H2O = 5'-phosphoguanylyl(3'-&gt;5')guanosine + H(+). Its function is as follows. Phosphodiesterase (PDE) that catalyzes the hydrolysis of cyclic-di-GMP (c-di-GMP) to 5'-pGpG. Overexpression reduces biofilm formation. Cyclic-di-GMP is a second messenger which controls cell surface-associated traits in bacteria. This chain is Probable cyclic di-GMP phosphodiesterase PdeI, found in Escherichia coli (strain K12).